We begin with the raw amino-acid sequence, 622 residues long: 1,4-alpha-glucan branching enzyme GlgB (622 aa).

The Nucleophile role is filled by aspartate 306. Glutamate 358 (proton donor) is an active-site residue. Positions 581–606 are disordered; sequence YGGSNVGNRGAVHSDPVEKHGHSHSL.

The protein belongs to the glycosyl hydrolase 13 family. GlgB subfamily. Monomer.

The enzyme catalyses Transfers a segment of a (1-&gt;4)-alpha-D-glucan chain to a primary hydroxy group in a similar glucan chain.. Its pathway is glycan biosynthesis; glycogen biosynthesis. Functionally, catalyzes the formation of the alpha-1,6-glucosidic linkages in glycogen by scission of a 1,4-alpha-linked oligosaccharide from growing alpha-1,4-glucan chains and the subsequent attachment of the oligosaccharide to the alpha-1,6 position. The polypeptide is 1,4-alpha-glucan branching enzyme GlgB (Salinibacter ruber (strain DSM 13855 / M31)).